Here is a 144-residue protein sequence, read N- to C-terminus: Large ribosomal subunit protein uL15 (144 aa).

Residues 1–57 (MRFNELQPAKGSRFAGKRLGRGIGSGLGKTSGKGHKGQKARSGGYHKVGFEGGQMPL) form a disordered region. Residues 21–31 (RGIGSGLGKTS) show a composition bias toward gly residues.

This sequence belongs to the universal ribosomal protein uL15 family. Part of the 50S ribosomal subunit.

Binds to the 23S rRNA. This Dichelobacter nodosus (strain VCS1703A) protein is Large ribosomal subunit protein uL15.